A 581-amino-acid chain; its full sequence is Arginine--tRNA ligase (581 aa).

The short motif at 126-136 is the 'HIGH' region element; that stretch reads PNLAKEMHVGH.

Belongs to the class-I aminoacyl-tRNA synthetase family. Monomer.

Its subcellular location is the cytoplasm. It catalyses the reaction tRNA(Arg) + L-arginine + ATP = L-arginyl-tRNA(Arg) + AMP + diphosphate. The sequence is that of Arginine--tRNA ligase from Shewanella sediminis (strain HAW-EB3).